Here is a 216-residue protein sequence, read N- to C-terminus: Cytidylate kinase (216 aa).

Residue glycine 7–threonine 15 coordinates ATP.

It belongs to the cytidylate kinase family. Type 1 subfamily.

The protein resides in the cytoplasm. It catalyses the reaction CMP + ATP = CDP + ADP. The catalysed reaction is dCMP + ATP = dCDP + ADP. The chain is Cytidylate kinase from Chlamydia trachomatis serovar D (strain ATCC VR-885 / DSM 19411 / UW-3/Cx).